The chain runs to 390 residues: MMIKKVERFFKSDAAGGIVLIAAAALAMLLANLNATQELYTGFLSTPVELKFGALEIKKNMLLWVNDALMAVFFLLVGLEVKRELVQGSLASRRQASLPVIAALGGMVLPAALYLAFNFQDPITRAGWAIPAATDIAFALGILALLGSRVPPALKVFLMALAIIDDLGAIVIIALFYTSSLSMVSLMVAAGAIAVLAVLNLCNVRRVGVYILVGVVLWTAVLKSGVHATLAGVIIGFFVPLKAQKGHSPAGTLEHALHPWVGFLILPLFAFANAGVSLDGVTLAGLASLLPLGIIAGLFIGKPLGISLFCALAVKLKWATLPPGVSQKTILAVGVLCGIGFTMSIFIASLAFGDVDAALVTWAKLGILVGSLLAAVIGYALLRSHLSRAP.

The next 12 membrane-spanning stretches (helical) occupy residues 14–34 (AAGG…ANLN), 61–81 (MLLW…GLEV), 97–117 (SLPV…YLAF), 126–146 (AGWA…LALL), 156–176 (VFLM…IALF), 181–201 (LSMV…VLNL), 221–241 (VLKS…FVPL), 256–276 (ALHP…NAGV), 280–300 (GVTL…GLFI), 305–325 (GISL…PPGV), 330–350 (ILAV…IASL), and 362–382 (WAKL…YALL).

This sequence belongs to the NhaA Na(+)/H(+) (TC 2.A.33) antiporter family.

Its subcellular location is the cell inner membrane. It carries out the reaction Na(+)(in) + 2 H(+)(out) = Na(+)(out) + 2 H(+)(in). Functionally, na(+)/H(+) antiporter that extrudes sodium in exchange for external protons. This chain is Na(+)/H(+) antiporter NhaA, found in Cronobacter sakazakii (strain ATCC BAA-894) (Enterobacter sakazakii).